Here is a 615-residue protein sequence, read N- to C-terminus: 1-deoxy-D-xylulose-5-phosphate synthase (615 aa).

Residues His-76 and Gly-117 to Ser-119 each bind thiamine diphosphate. Asp-148 is a binding site for Mg(2+). Thiamine diphosphate contacts are provided by residues Gly-149–Ala-150, Asn-177, Tyr-284, and Glu-365. Mg(2+) is bound at residue Asn-177.

Belongs to the transketolase family. DXPS subfamily. Homodimer. It depends on Mg(2+) as a cofactor. Thiamine diphosphate serves as cofactor.

The catalysed reaction is D-glyceraldehyde 3-phosphate + pyruvate + H(+) = 1-deoxy-D-xylulose 5-phosphate + CO2. Its pathway is metabolic intermediate biosynthesis; 1-deoxy-D-xylulose 5-phosphate biosynthesis; 1-deoxy-D-xylulose 5-phosphate from D-glyceraldehyde 3-phosphate and pyruvate: step 1/1. Catalyzes the acyloin condensation reaction between C atoms 2 and 3 of pyruvate and glyceraldehyde 3-phosphate to yield 1-deoxy-D-xylulose-5-phosphate (DXP). The protein is 1-deoxy-D-xylulose-5-phosphate synthase of Francisella tularensis subsp. tularensis (strain FSC 198).